The following is a 412-amino-acid chain: Arginine biosynthesis bifunctional protein ArgJ (412 aa).

The substrate site is built by T162, K188, T199, E285, N407, and T412. Catalysis depends on T199, which acts as the Nucleophile.

Belongs to the ArgJ family. Heterotetramer of two alpha and two beta chains.

The protein resides in the cytoplasm. The catalysed reaction is N(2)-acetyl-L-ornithine + L-glutamate = N-acetyl-L-glutamate + L-ornithine. The enzyme catalyses L-glutamate + acetyl-CoA = N-acetyl-L-glutamate + CoA + H(+). The protein operates within amino-acid biosynthesis; L-arginine biosynthesis; L-ornithine and N-acetyl-L-glutamate from L-glutamate and N(2)-acetyl-L-ornithine (cyclic): step 1/1. It functions in the pathway amino-acid biosynthesis; L-arginine biosynthesis; N(2)-acetyl-L-ornithine from L-glutamate: step 1/4. Catalyzes two activities which are involved in the cyclic version of arginine biosynthesis: the synthesis of N-acetylglutamate from glutamate and acetyl-CoA as the acetyl donor, and of ornithine by transacetylation between N(2)-acetylornithine and glutamate. In Staphylococcus saprophyticus subsp. saprophyticus (strain ATCC 15305 / DSM 20229 / NCIMB 8711 / NCTC 7292 / S-41), this protein is Arginine biosynthesis bifunctional protein ArgJ.